Consider the following 233-residue polypeptide: B-cell lymphoma/leukemia 10 (233 aa).

The residue at position 1 (Met-1) is an N-acetylmethionine. A CARD domain is found at 13–101; the sequence is LTEVKKDALE…QNFLIQKITD (89 aa). Glycyl lysine isopeptide (Lys-Gly) (interchain with G-Cter in ubiquitin) cross-links involve residues Lys-17, Lys-31, and Lys-63. The segment covering 130–141 has biased composition (polar residues); that stretch reads TNNLSRSNSDES. 2 disordered regions span residues 130–149 and 186–233; these read TNNL…KQRP and SFSS…LSRQ. Ser-138 is subject to Phosphoserine. The span at 195 to 205 shows a compositional bias: pro residues; it reads PGDPGAPPLPP.

As to quaternary structure, homomultimer; homooligomerized following recruitment by CARD domain-containing proteins that form a nucleating helical template that recruits BCL10 via CARD-CARD interaction. Self-associates by CARD-CARD interaction and interacts with other CARD-proteins such as CARD9, CARD10, CARD11 and CARD14. Forms a complex with CARD14 and MALT1; resulting in the formation of a CBM (CARD14-BCL10-MALT1) complex. Forms a complex with CARD11 and MALT1; resulting in the formation of a CBM (CARD11-BCL10-MALT1) complex. Forms a complex with CARD9 and MALT1; resulting in the formation of a CBM (CARD9-BCL10-MALT1) complex. Found in a membrane raft complex, at least composed of BCL10, CARD11, DPP4 and IKBKB. Binds caspase-9 with its C-terminal domain. Interacts with TRAF2 and BIRC2/c-IAP2. Interacts with PELI2 and SOCS3; these interactions may be mutually exclusive. Post-translationally, phosphorylated. Phosphorylation results in dissociation from TRAF2 and binding to BIRC2/c-IAP2. Phosphorylated by IKBKB/IKKB. In terms of processing, ubiquitinated via both 'Lys-63'-linked and linear ('Met-1'-linked) polyubiquitin chains in response to T-cell receptor (TCR) activation. Ubiquitination is recognized by IKBKG/NEMO, the regulatory subunit of I-kappa-B kinase (IKK), and is required for TCR-induced NF-kappa-B activation. Linear ubiquitination at Lys-17, Lys-31 and Lys-63 is mediated by RNF31/HOIP; linear ubiquitination is recognized with much higher affinity than 'Lys-63'-linked ubiquitin by IKBKG/NEMO. CARD11 is required for linear ubiquitination by HOIP by promoting the targeting of BCL10 to RNF31/HOIP. Proteolytically cleaved by MALT1; required for T-cell activation.

The protein resides in the cytoplasm. It localises to the perinuclear region. The protein localises to the membrane raft. In terms of biological role, plays a key role in both adaptive and innate immune signaling by bridging CARD domain-containing proteins to immune activation. Acts by channeling adaptive and innate immune signaling downstream of CARD domain-containing proteins CARD9, CARD11 and CARD14 to activate NF-kappa-B and MAP kinase p38 (MAPK11, MAPK12, MAPK13 and/or MAPK14) pathways which stimulate expression of genes encoding pro-inflammatory cytokines and chemokines. Recruited by activated CARD domain-containing proteins: homooligomerized CARD domain-containing proteins form a nucleating helical template that recruits BCL10 via CARD-CARD interaction, thereby promoting polymerization of BCL10, subsequent recruitment of MALT1 and formation of a CBM complex. This leads to activation of NF-kappa-B and MAP kinase p38 (MAPK11, MAPK12, MAPK13 and/or MAPK14) pathways which stimulate expression of genes encoding pro-inflammatory cytokines and chemokines. Activated by CARD9 downstream of C-type lectin receptors; CARD9-mediated signals are essential for antifungal immunity. Activated by CARD11 downstream of T-cell receptor (TCR) and B-cell receptor (BCR). Promotes apoptosis, pro-caspase-9 maturation and activation of NF-kappa-B via NIK and IKK. In Rattus norvegicus (Rat), this protein is B-cell lymphoma/leukemia 10.